A 347-amino-acid chain; its full sequence is UDP-3-O-acylglucosamine N-acyltransferase (347 aa).

His-241 functions as the Proton acceptor in the catalytic mechanism.

Belongs to the transferase hexapeptide repeat family. LpxD subfamily. In terms of assembly, homotrimer.

The enzyme catalyses a UDP-3-O-[(3R)-3-hydroxyacyl]-alpha-D-glucosamine + a (3R)-hydroxyacyl-[ACP] = a UDP-2-N,3-O-bis[(3R)-3-hydroxyacyl]-alpha-D-glucosamine + holo-[ACP] + H(+). The protein operates within bacterial outer membrane biogenesis; LPS lipid A biosynthesis. Its function is as follows. Catalyzes the N-acylation of UDP-3-O-acylglucosamine using 3-hydroxyacyl-ACP as the acyl donor. Is involved in the biosynthesis of lipid A, a phosphorylated glycolipid that anchors the lipopolysaccharide to the outer membrane of the cell. This chain is UDP-3-O-acylglucosamine N-acyltransferase, found in Neisseria meningitidis serogroup A / serotype 4A (strain DSM 15465 / Z2491).